Here is a 217-residue protein sequence, read N- to C-terminus: Glutathione S-transferase U20 (217 aa).

The region spanning 3–82 (NLPILLDYWP…YVDEAWPEKN (80 aa)) is the GST N-terminal domain. Residues Ser-13, Ile-54, and Ser-67 each contribute to the glutathione site. A GST C-terminal domain is found at 88-208 (DPYGRAQARF…LPDSEKIVAY (121 aa)).

It belongs to the GST superfamily. Tau family. Homodimerization. Interacts with JAR1/FIN219 under continuous far red (cFR) light to stimulate JAR1/FIN219 activity and substrate selectivity. In terms of tissue distribution, mostly associated with vascular tissues, especially near hydathodes.

It is found in the nucleus. The protein resides in the cytoplasm. It localises to the cytosol. The catalysed reaction is RX + glutathione = an S-substituted glutathione + a halide anion + H(+). With respect to regulation, activated by JAR1/FIN219. In terms of biological role, exhibits glutathione-dependent thiol transferase activities. Can use glutathione (GSH) and 1-chloro-2,4-dinitrobenzene (CDNB) as substrates. Involved in the regulation of far-red light influence on development. Regulator of the interplay between light and JA signaling by increasing JAR1/FIN219 efficiency. Maybe involved in gravitropic signal transduction. In Arabidopsis thaliana (Mouse-ear cress), this protein is Glutathione S-transferase U20.